The sequence spans 129 residues: Biogenesis of lysosome-related organelles complex 1 subunit CNL1 (129 aa).

This sequence belongs to the BLOC1S4 family. As to quaternary structure, component of the biogenesis of lysosome-related organelles complex-1 (BLOC-1).

The protein localises to the cytoplasm. Functionally, component of the biogenesis of lysosome-related organelles complex-1 (BLOC-1), a complex that is involved in endosomal cargo sorting. The chain is Biogenesis of lysosome-related organelles complex 1 subunit CNL1 (CLN1) from Eremothecium gossypii (strain ATCC 10895 / CBS 109.51 / FGSC 9923 / NRRL Y-1056) (Yeast).